Here is a 216-residue protein sequence, read N- to C-terminus: Elongation factor Ts (216 aa).

Residues 81–84 (TDFV) form an involved in Mg(2+) ion dislocation from EF-Tu region.

The protein belongs to the EF-Ts family.

Its subcellular location is the cytoplasm. Its function is as follows. Associates with the EF-Tu.GDP complex and induces the exchange of GDP to GTP. It remains bound to the aminoacyl-tRNA.EF-Tu.GTP complex up to the GTP hydrolysis stage on the ribosome. In Geobacter sp. (strain M21), this protein is Elongation factor Ts.